Consider the following 159-residue polypeptide: MKIAVYPGSFDPITNGHLDIIERGSKVFDKLIIGVLVNVDKKGLFEIEERVELIKKVTKHIKNVEVLSFNGLLIDFLKASNAKIILKGLRAVSDFEYEFKMALMNNKLDPDIETVFMMTSAQYSYLSSSSVKQVAKFGGCIEGLVPKEIISDVIRRSKI.

Ser-9 contributes to the substrate binding site. ATP is bound by residues 9 to 10 (SF) and His-17. 3 residues coordinate substrate: Lys-41, Leu-73, and Lys-87. Residues 88 to 90 (GLR), Glu-98, and 123 to 129 (YSYLSSS) each bind ATP.

This sequence belongs to the bacterial CoaD family. As to quaternary structure, homohexamer. It depends on Mg(2+) as a cofactor.

It is found in the cytoplasm. It carries out the reaction (R)-4'-phosphopantetheine + ATP + H(+) = 3'-dephospho-CoA + diphosphate. It participates in cofactor biosynthesis; coenzyme A biosynthesis; CoA from (R)-pantothenate: step 4/5. In terms of biological role, reversibly transfers an adenylyl group from ATP to 4'-phosphopantetheine, yielding dephospho-CoA (dPCoA) and pyrophosphate. The chain is Phosphopantetheine adenylyltransferase from Clostridium botulinum (strain Eklund 17B / Type B).